Reading from the N-terminus, the 562-residue chain is Pyruvate kinase isozyme G, chloroplastic (562 aa).

Arg-121 is a substrate binding site. The K(+) site is built by Asn-123, Ser-125, Asp-156, and Thr-157. ATP is bound at residue 123–126 (NMSH). Mg(2+) is bound at residue Glu-308. Gly-331, Asp-332, and Thr-364 together coordinate substrate. Mg(2+) is bound at residue Asp-332.

The protein belongs to the pyruvate kinase family. Homotetramer. It depends on Mg(2+) as a cofactor. Requires K(+) as cofactor. As to expression, highest levels in leaves. Also found in stems, roots and flowers.

The protein resides in the plastid. Its subcellular location is the chloroplast. It carries out the reaction pyruvate + ATP = phosphoenolpyruvate + ADP + H(+). It functions in the pathway carbohydrate degradation; glycolysis; pyruvate from D-glyceraldehyde 3-phosphate: step 5/5. This chain is Pyruvate kinase isozyme G, chloroplastic, found in Nicotiana tabacum (Common tobacco).